A 348-amino-acid polypeptide reads, in one-letter code: Ion-translocating oxidoreductase complex subunit D (348 aa).

Helical transmembrane passes span 23 to 43 (WVLA…GYGT), 44 to 64 (LIQL…IMLL), 72 to 91 (ALRD…AIPP), and 126 to 146 (IAYV…MAPI). Thr-187 carries the FMN phosphoryl threonine modification. Helical transmembrane passes span 214–234 (FAGI…LILL), 243–263 (IPMA…LFAP), 266–286 (TASP…FFIA), 300–320 (LIYG…GGFP), and 321–341 (DGVA…DYYT).

It belongs to the NqrB/RnfD family. In terms of assembly, the complex is composed of six subunits: RnfA, RnfB, RnfC, RnfD, RnfE and RnfG. The cofactor is FMN.

The protein localises to the cell inner membrane. Its function is as follows. Part of a membrane-bound complex that couples electron transfer with translocation of ions across the membrane. The chain is Ion-translocating oxidoreductase complex subunit D from Vibrio cholerae serotype O1 (strain ATCC 39315 / El Tor Inaba N16961).